The sequence spans 506 residues: NAD(P)H-quinone oxidoreductase subunit 2 (506 aa).

14 helical membrane-spanning segments follow: residues 14-34, 42-62, 79-99, 108-128, 132-152, 167-187, 206-226, 240-260, 276-296, 302-322, 330-350, 374-394, 409-429, and 462-482; these read AIIP…VDLA, WAPV…ALQW, LAIA…LISW, PIGE…LLCG, LVSV…LSGY, LLVG…LYGL, FITS…IAAV, PTPV…AFAI, LLFT…ALAQ, MLAY…VSGT, VLYL…VILF, LGLS…GFFG, LLVV…ISVI, and IALY…NPLF.

It belongs to the complex I subunit 2 family. NDH-1 can be composed of about 15 different subunits; different subcomplexes with different compositions have been identified which probably have different functions.

It localises to the cellular thylakoid membrane. It carries out the reaction a plastoquinone + NADH + (n+1) H(+)(in) = a plastoquinol + NAD(+) + n H(+)(out). The catalysed reaction is a plastoquinone + NADPH + (n+1) H(+)(in) = a plastoquinol + NADP(+) + n H(+)(out). NDH-1 shuttles electrons from an unknown electron donor, via FMN and iron-sulfur (Fe-S) centers, to quinones in the respiratory and/or the photosynthetic chain. The immediate electron acceptor for the enzyme in this species is believed to be plastoquinone. Couples the redox reaction to proton translocation, and thus conserves the redox energy in a proton gradient. Cyanobacterial NDH-1 also plays a role in inorganic carbon-concentration. The sequence is that of NAD(P)H-quinone oxidoreductase subunit 2 from Prochlorococcus marinus subsp. pastoris (strain CCMP1986 / NIES-2087 / MED4).